The chain runs to 155 residues: Endoribonuclease YbeY (155 aa).

Zn(2+)-binding residues include H114, H118, and H124.

Belongs to the endoribonuclease YbeY family. The cofactor is Zn(2+).

It localises to the cytoplasm. In terms of biological role, single strand-specific metallo-endoribonuclease involved in late-stage 70S ribosome quality control and in maturation of the 3' terminus of the 16S rRNA. The polypeptide is Endoribonuclease YbeY (Escherichia coli O17:K52:H18 (strain UMN026 / ExPEC)).